The chain runs to 156 residues: ATP synthase subunit b (156 aa).

A helical membrane pass occupies residues 12–32; that stretch reads VAFFIFVLFCMKFVWPPVIAA.

The protein belongs to the ATPase B chain family. As to quaternary structure, F-type ATPases have 2 components, F(1) - the catalytic core - and F(0) - the membrane proton channel. F(1) has five subunits: alpha(3), beta(3), gamma(1), delta(1), epsilon(1). F(0) has three main subunits: a(1), b(2) and c(10-14). The alpha and beta chains form an alternating ring which encloses part of the gamma chain. F(1) is attached to F(0) by a central stalk formed by the gamma and epsilon chains, while a peripheral stalk is formed by the delta and b chains.

The protein resides in the cell inner membrane. Functionally, f(1)F(0) ATP synthase produces ATP from ADP in the presence of a proton or sodium gradient. F-type ATPases consist of two structural domains, F(1) containing the extramembraneous catalytic core and F(0) containing the membrane proton channel, linked together by a central stalk and a peripheral stalk. During catalysis, ATP synthesis in the catalytic domain of F(1) is coupled via a rotary mechanism of the central stalk subunits to proton translocation. In terms of biological role, component of the F(0) channel, it forms part of the peripheral stalk, linking F(1) to F(0). The chain is ATP synthase subunit b from Pseudomonas aeruginosa (strain UCBPP-PA14).